Reading from the N-terminus, the 157-residue chain is MLSISPIVSLRRCDNEPSMPDEWRLYNLATRLRTFSNWPFTEDCACTPERMAEAGFVHCPTDNSPDVVKCFFCLKELEGWQPEDDPMDEHKKHSPSCLFIALKKKAEELTLSEFLKLDLEHMKIKMQKQMNLHIERFQAKANEVRGHLEKLDADETQ.

The stretch at 31-101 is one BIR repeat; sequence RLRTFSNWPF…KHSPSCLFIA (71 aa). Residue T47 is modified to Phosphothreonine; by CDK1. Zn(2+) contacts are provided by C70, C73, H90, and C97.

It belongs to the IAP family. Component of the CPC at least composed of survivin/birc5, incenp, cdca8/borealin and/or cdca9/dasra-A, and aurkb/aurora-B. Interacts directly with incenp (via N-terminus). Interacts with rxra; the interaction is stronger in the absence of 9-cis retinoic acids. Post-translationally, ubiquitination is required for centrosome-targeting. In terms of tissue distribution, exhibits strong and homogeneous expression in developing oocytes. In embryos, expressed in the animal hemisphere from one-cell to yolk plug stages, and highly expressed in the future brain and dorsal region of the neural tube at the neurula stage and early tail-bud stage. At tadpole stages, expression is restricted at a low level to the head region.

It is found in the cytoplasm. The protein resides in the nucleus. It localises to the chromosome. The protein localises to the centromere. Its subcellular location is the cytoskeleton. It is found in the spindle. Functionally, does not appear to exhibit anti-apoptotic activity. Plays a role in increasing blood vessel size during development. Component of the chromosomal passenger complex (CPC), a complex that acts as a key regulator of mitosis. The CPC complex has essential functions at the centromere in ensuring correct chromosome alignment and segregation and is required for chromatin-induced microtubule stabilization and spindle assembly. The protein is Baculoviral IAP repeat-containing protein 5.2-B (birc5.2-b) of Xenopus laevis (African clawed frog).